A 500-amino-acid polypeptide reads, in one-letter code: MEFGVKSGSPEKQRSACIVVGVFEPRRLSAVAEQLDRVSDGYLSSLLRRGDLEGKTGQMLLLHQVPGVLSERVLLVGCGKERELDERQFKQIIQKTISTLNETGSMEAVCFLTELHVKGRDAYWKVRQAVETAQNSLYTFDQFKTNKAELRRPLRKLVFNVATRRELSIGEKAIAHGLAISNGMKICRDVANMPPNICTPAYLASQARRLADSCQYITTKVIGEQQMAELGMNAYLAVAKGSSNEAMMSVMEYKGHPDAKPIVLVGKGLTFDSGGISIKPAEGMDEMKYDMGGAASVLGTMTALAELKPPINVIGVLAGAENMPDGKAYRPGDILTSMSGQTIEVLNTDAEGRLVLCDVLTYVERFEPESVVDIATLTGACVIALGSHASGLMSNHNPLAHELLNASELSGDKAWRLPLWDEYQEQIESPFADMVNTGGRPAGAITAGAFLSRFTKKYNWAHLDIAGTAWKSGKEKGSTGRPVPLLTQFLLNRAGVEVED.

The Mn(2+) site is built by lysine 267 and aspartate 272. Lysine 279 is an active-site residue. Residues aspartate 290, aspartate 349, and glutamate 351 each coordinate Mn(2+). Residue arginine 353 is part of the active site.

It belongs to the peptidase M17 family. Mn(2+) serves as cofactor.

The protein localises to the cytoplasm. It carries out the reaction Release of an N-terminal amino acid, Xaa-|-Yaa-, in which Xaa is preferably Leu, but may be other amino acids including Pro although not Arg or Lys, and Yaa may be Pro. Amino acid amides and methyl esters are also readily hydrolyzed, but rates on arylamides are exceedingly low.. The catalysed reaction is Release of an N-terminal amino acid, preferentially leucine, but not glutamic or aspartic acids.. Presumably involved in the processing and regular turnover of intracellular proteins. Catalyzes the removal of unsubstituted N-terminal amino acids from various peptides. The polypeptide is Probable cytosol aminopeptidase (Tolumonas auensis (strain DSM 9187 / NBRC 110442 / TA 4)).